We begin with the raw amino-acid sequence, 782 residues long: Cleavage and polyadenylation specificity factor subunit 2 (782 aa).

Residues 407–416 (KKLEQSKEAD) show a composition bias toward basic and acidic residues. Residues 407–449 (KKLEQSKEADIDSSDESDIEEDIDQPSAHKTKHDLMMKGEGSR) form a disordered region. Residues 417-430 (IDSSDESDIEEDID) are compositionally biased toward acidic residues. 3 positions are modified to phosphoserine: serine 419, serine 420, and serine 423. Basic and acidic residues predominate over residues 439 to 449 (HDLMMKGEGSR). Serine 660 is modified (phosphoserine).

Belongs to the metallo-beta-lactamase superfamily. RNA-metabolizing metallo-beta-lactamase-like family. CPSF2/YSH1 subfamily. In terms of assembly, component of the cleavage and polyadenylation specificity factor (CPSF) complex, composed of CPSF1, CPSF2, CPSF3, CPSF4 and FIP1L1. Interacts with CPSF3, CSTF2 and SYMPK. Interacts with ZC3H3.

Its subcellular location is the nucleus. In terms of biological role, component of the cleavage and polyadenylation specificity factor (CPSF) complex that play a key role in pre-mRNA 3'-end formation, recognizing the AAUAAA signal sequence and interacting with poly(A) polymerase and other factors to bring about cleavage and poly(A) addition. Involved in the histone 3' end pre-mRNA processing. This Homo sapiens (Human) protein is Cleavage and polyadenylation specificity factor subunit 2 (CPSF2).